The primary structure comprises 344 residues: Krueppel-like factor 3 (344 aa).

Residues 1 to 74 (MLMFDPVPVK…TVNKRGSPPA (74 aa)) form a repressor domain region. K10 participates in a covalent cross-link: Glycyl lysine isopeptide (Lys-Gly) (interchain with G-Cter in SUMO). Positions 60–68 (EPVDLTVNK) match the 9aaTAD; inactive motif. Positions 61-65 (PVDLT) match the CTBP-binding motif motif. Residues 66-111 (VNKRGSPPAAGGSPSSLKFPSHRRASPGLSMPSSSPPIKKYSPPSP) form a disordered region. K68 is covalently cross-linked (Glycyl lysine isopeptide (Lys-Gly) (interchain with G-Cter in SUMO2)). Low complexity-rich tracts occupy residues 70–81 (GSPPAAGGSPSS) and 91–107 (SPGL…KKYS). A phosphoserine mark is found at S71, S91, S100, S107, and S110. K195 is covalently cross-linked (Glycyl lysine isopeptide (Lys-Gly) (interchain with G-Cter in SUMO2)). K197 is covalently cross-linked (Glycyl lysine isopeptide (Lys-Gly) (interchain with G-Cter in SUMO); alternate). Residue K197 forms a Glycyl lysine isopeptide (Lys-Gly) (interchain with G-Cter in SUMO2); alternate linkage. A phosphoserine mark is found at S215, S223, and S249. A disordered region spans residues 235 to 254 (SVIVQPGKRPLPVESPDTQR). 3 C2H2-type zinc fingers span residues 259-283 (HRCD…RRTH), 289-313 (YKCT…FRKH), and 319-341 (FQCP…RKRH).

The protein belongs to the krueppel C2H2-type zinc-finger protein family. As to quaternary structure, monomer. Post-translationally, sumoylated with SUMO1. Sumoylation is enhanced by PIAS1, PIAS2alpha and PIAS2beta, and PIAS4, but not by Pc2. Enhances transcriptional repression, but has no effect on DNA binding. Sumoylation on Lys-197 is the major site. In terms of tissue distribution, in 8.5 day embryos, expressed in midbrain, anterior hindbrain and ventral forebrain. In 9 day embryos, expressed throughout ventral anterior half of embryo including midbrain-hindbrain junction, ventral midbrain, diencephalon and forebrain. At 10.5 days, distribution is more widespread with expression also found in developing limb buds. Widely expressed in the adult.

The protein resides in the nucleus. In terms of biological role, binds to the CACCC box of erythroid cell-expressed genes. May play a role in hematopoiesis. The polypeptide is Krueppel-like factor 3 (Klf3) (Mus musculus (Mouse)).